Consider the following 442-residue polypeptide: Protein IQ-DOMAIN 33 (442 aa).

The 30-residue stretch at 159–188 (EEDAAVIIQSAFRSYLAIRRSKEEEETFAK) folds into the IQ domain. A disordered region spans residues 184–212 (ETFAKEESFSGEESQDNASMGTSLEAQTG). The segment covering 199–212 (DNASMGTSLEAQTG) has biased composition (polar residues). Residues 270-282 (RERALAYAFSQQL) form a calmodulin-binding region. The segment at 375-442 (EKSSFKPSIS…ETSHKLNSST (68 aa)) is disordered. Residues 383–402 (ISKRKSVPSYKSQRKHHKLQ) show a composition bias toward basic residues. The short motif at 385–392 (KRKSVPSY) is the Nuclear localization signal element.

The protein belongs to the IQD family. As to quaternary structure, binds to multiple calmodulin (CaM) in the presence of Ca(2+) and CaM-like proteins.

The protein resides in the nucleus. Its function is as follows. May be involved in cooperative interactions with calmodulins or calmodulin-like proteins. Recruits calmodulin proteins to microtubules, thus being a potential scaffold in cellular signaling and trafficking. May associate with nucleic acids and regulate gene expression at the transcriptional or post-transcriptional level. In Arabidopsis thaliana (Mouse-ear cress), this protein is Protein IQ-DOMAIN 33.